Here is a 104-residue protein sequence, read N- to C-terminus: MFSKATLFFTAAVVIVAAGATPTTSQCNTGPVQCCDHTQQASGPTTLTGIGEVDLGDTSTLIAYGNCSPVLPVLGGPKCQGQTVCCDNTEFEGLVNVGCTNVAV.

The first 25 residues, 1-25, serve as a signal peptide directing secretion; that stretch reads MFSKATLFFTAAVVIVAAGATPTTS. Intrachain disulfides connect Cys-27–Cys-85, Cys-34–Cys-79, Cys-35–Cys-67, and Cys-86–Cys-99.

The protein belongs to the fungal hydrophobin family. In terms of assembly, self-assembles to form functional amyloid fibrils called rodlets. Self-assembly into fibrillar rodlets occurs spontaneously at hydrophobic:hydrophilic interfaces and the rodlets further associate laterally to form amphipathic monolayers.

The protein localises to the secreted. Its subcellular location is the cell wall. Its function is as follows. Aerial growth, conidiation, and dispersal of filamentous fungi in the environment rely upon a capability of their secreting small amphipathic proteins called hydrophobins (HPBs) with low sequence identity. Class I can self-assemble into an outermost layer of rodlet bundles on aerial cell surfaces, conferring cellular hydrophobicity that supports fungal growth, development and dispersal; whereas Class II form highly ordered films at water-air interfaces through intermolecular interactions but contribute nothing to the rodlet structure. Hydph12 is a class I hydrophobin involved in the formation of mycelium knots. This is Class I hydrophobin 12 from Pleurotus ostreatus (strain PC15) (Oyster mushroom).